Reading from the N-terminus, the 215-residue chain is MSKVYDWFEERLEIQAIADDITSKYVPPHVNIFYCIGGITFTCFLVQVATGFAMTFYYRPTVAEAFASVQYIMTDVNFGWLIRSIHRWSASMMVLMMVLHVFRVYLTGGFKRPRELTWVTGVIMAVCTVSFGVTGYSLPWDQVGYWAVKIVTGVPDAIPGVGGFIVELLRGGVGVGQATLTRFYSLHTFVLPLLTAVFMLMHFLMIRKQGISGPL.

A helical transmembrane segment spans residues 32–52; sequence IFYCIGGITFTCFLVQVATGF. A heme c-binding site is contributed by Cys-35. The heme b site is built by Gly-37, Arg-83, His-86, His-100, Arg-103, and Arg-114. Residues 90-110 form a helical membrane-spanning segment; sequence ASMMVLMMVLHVFRVYLTGGF. 2 helical membrane-spanning segments follow: residues 116–136 and 186–206; these read LTWV…VTGY and LHTF…FLMI. Heme b is bound by residues His-187 and His-202. Residues Arg-207 and Ile-211 each contribute to the heme c site. Ser-212 serves as a coordination point for heme b.

The protein belongs to the cytochrome b family. PetB subfamily. The 4 large subunits of the cytochrome b6-f complex are cytochrome b6, subunit IV (17 kDa polypeptide, PetD), cytochrome f and the Rieske protein, while the 4 small subunits are PetG, PetL, PetM and PetN. The complex functions as a dimer. Heme b is required as a cofactor. The cofactor is heme c. Post-translationally, the N-terminus is blocked.

Its subcellular location is the plastid. The protein resides in the chloroplast thylakoid membrane. Component of the cytochrome b6-f complex, which mediates electron transfer between photosystem II (PSII) and photosystem I (PSI), cyclic electron flow around PSI, and state transitions. The polypeptide is Cytochrome b6 (Chlamydomonas reinhardtii (Chlamydomonas smithii)).